The following is a 167-amino-acid chain: U-scoloptoxin-Er5c (167 aa).

A signal peptide spans 1–22 (MKTNCEFPLLCLLIVLVANVEG). Residues 23–94 (EVEDTGLKMV…KRLWRNWERR (72 aa)) constitute a propeptide that is removed on maturation. RLWRNWE repeat units follow at residues 34–40 (RLWRNWE), 61–67 (RLWRNWE), and 86–92 (RLWRNWE). At Q95 the chain carries Pyrrolidone carboxylic acid. The stretch at 107 to 113 (ELWRNWE) is one RLWRNWE 4; approximate repeat. A propeptide spanning residues 112–118 (WEDLKRR) is cleaved from the precursor. Residue Q119 is modified to Pyrrolidone carboxylic acid. One copy of the RLWRNWE 5 repeat lies at 134 to 140 (RLWRNWE). Positions 139 to 167 (WEDNHATLRKRSADSLSRQKRLGRERGKE) are excised as a propeptide. The segment at 147 to 167 (RKRSADSLSRQKRLGRERGKE) is disordered.

Belongs to the scoloptoxin-08 family. As to expression, expressed by the venom gland.

It localises to the secreted. This is U-scoloptoxin-Er5c from Ethmostigmus rubripes (Giant centipede).